The primary structure comprises 354 residues: Histidinol-phosphate aminotransferase (354 aa).

Position 222 is an N6-(pyridoxal phosphate)lysine (Lys-222).

The protein belongs to the class-II pyridoxal-phosphate-dependent aminotransferase family. Histidinol-phosphate aminotransferase subfamily. As to quaternary structure, homodimer. It depends on pyridoxal 5'-phosphate as a cofactor.

The enzyme catalyses L-histidinol phosphate + 2-oxoglutarate = 3-(imidazol-4-yl)-2-oxopropyl phosphate + L-glutamate. Its pathway is amino-acid biosynthesis; L-histidine biosynthesis; L-histidine from 5-phospho-alpha-D-ribose 1-diphosphate: step 7/9. In Staphylococcus carnosus (strain TM300), this protein is Histidinol-phosphate aminotransferase.